A 155-amino-acid chain; its full sequence is Riboflavin kinase (155 aa).

Gly-15, Lys-21, Thr-27, and Asn-29 together coordinate ATP. 2 residues coordinate Mg(2+): Thr-27 and Asn-29. Glu-79 (nucleophile) is an active-site residue. ATP is bound by residues Ile-82, His-84, and Tyr-91. FMN contacts are provided by Arg-104, Lys-107, and Phe-109.

In terms of assembly, monomer. Directly interacts with TNFRSF1A death domain. TNFRSF1A-binding may be supported by TRADD. In the absence of TNFRSF1A, interacts with TRADD. Independently of TNFRSF1A, interacts with the NADPH oxidase subunit CYBA. It depends on Zn(2+) as a cofactor. The cofactor is Mg(2+). In terms of tissue distribution, detected in brain, placenta and urinary bladder.

Its subcellular location is the cytoplasm. It catalyses the reaction riboflavin + ATP = FMN + ADP + H(+). The protein operates within cofactor biosynthesis; FMN biosynthesis; FMN from riboflavin (ATP route): step 1/1. Functionally, catalyzes the phosphorylation of riboflavin (vitamin B2) to form flavin-mononucleotide (FMN), hence rate-limiting enzyme in the synthesis of FAD. Essential for TNF-induced reactive oxygen species (ROS) production. Through its interaction with both TNFRSF1A and CYBA, physically and functionally couples TNFRSF1A to NADPH oxidase. TNF-activation of RFK may enhance the incorporation of FAD in NADPH oxidase, a critical step for the assembly and activation of NADPH oxidase. This Homo sapiens (Human) protein is Riboflavin kinase (RFK).